The chain runs to 764 residues: DNA-binding protein SATB1 (764 aa).

Residues 1 to 15 are compositionally biased toward basic and acidic residues; sequence MDHLNEATQGKEHSE. Residues 1 to 56 are disordered; sequence MDHLNEATQGKEHSEMSNNVSDPKGPPAKIARLEQNGSPLGRGRLGSTGGKMQGVP. A Nuclear localization signal motif is present at residues 20-40; that stretch reads VSDPKGPPAKIARLEQNGSPL. Gly residues predominate over residues 43 to 52; the sequence is GRLGSTGGKM. Residue Lys-51 forms a Glycyl lysine isopeptide (Lys-Gly) (interchain with G-Cter in SUMO2) linkage. Residues 71–172 enclose the CMP domain; it reads GTMLPVFCVV…VVTLKIQLHS (102 aa). Position 136 is an N6-acetyllysine (Lys-136). Residues 139–143 carry the Protein interaction motif; it reads PVPLS. One can recognise a CUTL domain in the interval 175-248; that stretch reads KLEDLPPEQW…WYKHFKKTKD (74 aa). Phosphoserine is present on Ser-185. The tract at residues 224 to 278 is nuclear matrix targeting sequence (NMTS); that stretch reads YYANVSAAKCQEFGRWYKHFKKTKDMMVEMDSLSELSQQGANHVNFGQQPVPGNT. Residues 224–278 carry the Nuclear matrix targeting sequence (NMTS) motif; it reads YYANVSAAKCQEFGRWYKHFKKTKDMMVEMDSLSELSQQGANHVNFGQQPVPGNT. Residues 266–296 are compositionally biased toward polar residues; that stretch reads HVNFGQQPVPGNTAEQPPSPAQLSHGSQPSV. The disordered stretch occupies residues 266–307; it reads HVNFGQQPVPGNTAEQPPSPAQLSHGSQPSVRTPLPNLHPGL. The segment at residues 361 to 448 is a DNA-binding region (CUT 1); the sequence is LEQQVSTNTE…ERDRIYQDER (88 aa). DNA is bound by residues Gln-390, 400–410, and Asn-425; that span reads RTQGLLSEILR. A disordered region spans residues 450–474; the sequence is RSLNAASAMGPAPLLSTPPSRPPQV. The segment at residues 484–571 is a DNA-binding region (CUT 2); the sequence is NGKPENNTMN…ERDAIYEQES (88 aa). The disordered stretch occupies residues 591–650; that stretch reads QIQQQQQQQQQQQQQQQPPPPPPQPQPQPQAGPRLPPRQPTVASSAESDEENRQKTRPRT. Low complexity predominate over residues 593–606; it reads QQQQQQQQQQQQQQ. Residues 607-629 are compositionally biased toward pro residues; that stretch reads QPPPPPPQPQPQPQAGPRLPPRQ. At Ser-638 the chain carries Phosphoserine. The homeobox DNA-binding region spans 646 to 705; it reads TRPRTKISVEALGILQSFIQDVGLYPDEEAIQTLSAQLDLPKYTIIKFFQNQRYYLKHHG. Lys-745 is covalently cross-linked (Glycyl lysine isopeptide (Lys-Gly) (interchain with G-Cter in SUMO)).

The protein belongs to the CUT homeobox family. In terms of assembly, interacts with PCAF. Interacts with sumoylated PML and HDAC1 Tat via the CMP domain. Also interacts with DYNLT3 and POLR2J2. Binds to EP300. Homodimer. Part of the nuclear protein complex gamma-globin promoter and enhancer binding factor (gamma-PE) composed at least of SATB1 and HOXB2. Interaction with CtBP1 when not acetylated stabilizes attachment to DNA and promotes transcription repression. Interacts with CUX1 (via DNA-binding domains); the interaction inhibits the attachment of both proteins to DNA. Post-translationally, sumoylated. Sumoylation promotes cleavage by caspases. Phosphorylated by PKC. Acetylated by PCAF. Phosphorylated form interacts with HDAC1, but unphosphorylated form interacts with PCAF. DNA binding properties are activated by phosphorylation and inactivated by acetylation. In opposition, gene expression is down-regulated by phosphorylation but up-regulated by acetylation. In terms of processing, cleaved at Asp-254 by caspase-3 and caspase-6 during T-cell apoptosis in thymus and during B-cell stimulation. The cleaved forms cannot dimerize and lose transcription regulation function because of impaired DNA and chromatin association. In terms of tissue distribution, expressed in the subventricular zone, rostral migratory stream and in the olfactory bulb (at protein level). Mainly expressed in thymus, spleen, and lymph nodes with a lower level observed in the brain.

Its subcellular location is the nucleus. The protein resides in the PML body. Its function is as follows. Required for the switching of fetal globin species, and beta- and gamma-globin genes regulation during erythroid differentiation. Plays a role in chromatin organization and nuclear architecture during apoptosis. Crucial silencing factor contributing to the initiation of X inactivation mediated by Xist RNA that occurs during embryogenesis and in lymphoma. Binds to DNA at special AT-rich sequences, the consensus SATB1-binding sequence (CSBS), at nuclear matrix- or scaffold-associated regions. Thought to recognize the sugar-phosphate structure of double-stranded DNA. Transcriptional repressor controlling nuclear and viral gene expression in a phosphorylated and acetylated status-dependent manner, by binding to matrix attachment regions (MARs) of DNA and inducing a local chromatin-loop remodeling. Acts as a docking site for several chromatin remodeling enzymes and also by recruiting corepressors (HDACs) or coactivators (HATs) directly to promoters and enhancers. Modulates genes that are essential in the maturation of the immune T-cell CD8SP from thymocytes. Promotes neuronal differentiation of neural stem/progenitor cells in the adult subventricular zone, possibly by positively regulating the expression of NEUROD1. This Mus musculus (Mouse) protein is DNA-binding protein SATB1 (Satb1).